Here is a 164-residue protein sequence, read N- to C-terminus: Transcription elongation factor GreA (164 aa).

A coiled-coil region spans residues 11–76 (EESYDRLKAE…LQELLNNAKV (66 aa)).

It belongs to the GreA/GreB family.

Functionally, necessary for efficient RNA polymerase transcription elongation past template-encoded arresting sites. The arresting sites in DNA have the property of trapping a certain fraction of elongating RNA polymerases that pass through, resulting in locked ternary complexes. Cleavage of the nascent transcript by cleavage factors such as GreA or GreB allows the resumption of elongation from the new 3'terminus. GreA releases sequences of 2 to 3 nucleotides. This chain is Transcription elongation factor GreA, found in Mycolicibacterium vanbaalenii (strain DSM 7251 / JCM 13017 / BCRC 16820 / KCTC 9966 / NRRL B-24157 / PYR-1) (Mycobacterium vanbaalenii).